The chain runs to 271 residues: Co-chaperone protein DjlA (271 aa).

The Periplasmic segment spans residues 1–6 (MQYWGK). The chain crosses the membrane as a helical span at residues 7-31 (IIGVAVALIMGGGFWGVVLGLLIGH). The Cytoplasmic portion of the chain corresponds to 32-271 (MFDKARSRKM…ELIKQQKGFK (240 aa)). A J domain is found at 205-271 (DACNVLGVKP…ELIKQQKGFK (67 aa)).

As to quaternary structure, homodimer.

It is found in the cell inner membrane. Regulatory DnaK co-chaperone. Direct interaction between DnaK and DjlA is needed for the induction of the wcaABCDE operon, involved in the synthesis of a colanic acid polysaccharide capsule, possibly through activation of the RcsB/RcsC phosphotransfer signaling pathway. The colanic acid capsule may help the bacterium survive conditions outside the host. The polypeptide is Co-chaperone protein DjlA (Escherichia coli O6:H1 (strain CFT073 / ATCC 700928 / UPEC)).